The chain runs to 92 residues: MPRSLKKGPFIDLHLLKKVEKAVESGDKKPVKTWSRRSTIFPNMIGLTIAVHNGRQHVPVYVSDEMVGHKLGEFAPTRTYRGHAADKKAKKK.

Belongs to the universal ribosomal protein uS19 family.

Its function is as follows. Protein S19 forms a complex with S13 that binds strongly to the 16S ribosomal RNA. The chain is Small ribosomal subunit protein uS19 from Proteus mirabilis (strain HI4320).